A 248-amino-acid chain; its full sequence is 4-hydroxy-tetrahydrodipicolinate reductase (248 aa).

NAD(+) contacts are provided by residues 74–76 (GTT) and 99–102 (SANF). His134 (proton donor/acceptor) is an active-site residue. (S)-2,3,4,5-tetrahydrodipicolinate is bound at residue His135. The Proton donor role is filled by Lys138. A (S)-2,3,4,5-tetrahydrodipicolinate-binding site is contributed by 144–145 (GT).

The protein belongs to the DapB family.

The protein resides in the cytoplasm. It carries out the reaction (S)-2,3,4,5-tetrahydrodipicolinate + NAD(+) + H2O = (2S,4S)-4-hydroxy-2,3,4,5-tetrahydrodipicolinate + NADH + H(+). The catalysed reaction is (S)-2,3,4,5-tetrahydrodipicolinate + NADP(+) + H2O = (2S,4S)-4-hydroxy-2,3,4,5-tetrahydrodipicolinate + NADPH + H(+). Its pathway is amino-acid biosynthesis; L-lysine biosynthesis via DAP pathway; (S)-tetrahydrodipicolinate from L-aspartate: step 4/4. Functionally, catalyzes the conversion of 4-hydroxy-tetrahydrodipicolinate (HTPA) to tetrahydrodipicolinate. This chain is 4-hydroxy-tetrahydrodipicolinate reductase, found in Chlorobium phaeobacteroides (strain DSM 266 / SMG 266 / 2430).